The following is a 329-amino-acid chain: GDP-mannose transporter (329 aa).

Residues 1–11 (MADKGSVAAKS) lie on the Cytoplasmic side of the membrane. A helical membrane pass occupies residues 12 to 32 (LTNSAPLSIFSYCAASILMTV). At 33 to 40 (TNKYAVSG) the chain is on the lumenal side. A helical membrane pass occupies residues 41-61 (VDFNFNFFLLAVQGIVCITLI). Topologically, residues 62–83 (SSLKQLNVITFREFNKVEAKKW) are cytoplasmic. Residues 84-104 (FPIAVLLVVMIYTSSKALQYL) form a helical membrane-spanning segment. Residues 105 to 107 (SIP) are Lumenal-facing. A helical membrane pass occupies residues 108-128 (IYTIFKNLTIILIAYGEVIWF). The Cytoplasmic segment spans residues 129-131 (GGR). A helical transmembrane segment spans residues 132–152 (VTNLALGSFVLMVLSSAVASY). Topologically, residues 153-163 (GDSNVDTGKLN) are lumenal. A helical membrane pass occupies residues 164-184 (FNIGYFWMFTNCFSSAAFVLF). The Cytoplasmic segment spans residues 185–196 (MRKRIKLTNFKD). Residues 197–217 (FDTMYYNNLLSIPILLFASLT) form a helical membrane-spanning segment. Residues 218–237 (TEDWSAKNIAQNFPEDTKYA) are Lumenal-facing. A helical membrane pass occupies residues 238 to 258 (VIASMIISGMSAVGISYTSAW). The Cytoplasmic segment spans residues 259–266 (CVRVTSST). The helical transmembrane segment at 267–287 (TYSMVGALNKLPIALSGLLFF) threads the bilayer. Residues 288 to 290 (KAP) lie on the Lumenal side of the membrane. Residues 291 to 311 (INFYSISSIFIGFAAGLVYAI) form a helical membrane-spanning segment. The Cytoplasmic portion of the chain corresponds to 312–329 (AKQKQKKEDELQLPTDKS).

It belongs to the TPT transporter family. SLC35D subfamily. In terms of assembly, homooligomer.

It is found in the golgi apparatus membrane. The protein localises to the cytoplasmic vesicle membrane. The protein resides in the endoplasmic reticulum membrane. Functionally, involved in the import of GDP-mannose from the cytoplasm into the Golgi lumen. This chain is GDP-mannose transporter (VIG4), found in Komagataella pastoris (Yeast).